Consider the following 287-residue polypeptide: Acetyl-coenzyme A carboxylase carboxyl transferase subunit beta (287 aa).

The CoA carboxyltransferase N-terminal domain maps to 25–287 (VWTKCSACEQ…KMLNTHVIEE (263 aa)). Residues Cys-29, Cys-32, Cys-48, and Cys-51 each contribute to the Zn(2+) site. Residues 29 to 51 (CSACEQVLYRAELERNLEVCPKC) form a C4-type zinc finger.

The protein belongs to the AccD/PCCB family. Acetyl-CoA carboxylase is a heterohexamer composed of biotin carboxyl carrier protein (AccB), biotin carboxylase (AccC) and two subunits each of ACCase subunit alpha (AccA) and ACCase subunit beta (AccD). Zn(2+) is required as a cofactor.

It is found in the cytoplasm. The catalysed reaction is N(6)-carboxybiotinyl-L-lysyl-[protein] + acetyl-CoA = N(6)-biotinyl-L-lysyl-[protein] + malonyl-CoA. The protein operates within lipid metabolism; malonyl-CoA biosynthesis; malonyl-CoA from acetyl-CoA: step 1/1. In terms of biological role, component of the acetyl coenzyme A carboxylase (ACC) complex. Biotin carboxylase (BC) catalyzes the carboxylation of biotin on its carrier protein (BCCP) and then the CO(2) group is transferred by the transcarboxylase to acetyl-CoA to form malonyl-CoA. The chain is Acetyl-coenzyme A carboxylase carboxyl transferase subunit beta from Aeromonas salmonicida (strain A449).